The sequence spans 150 residues: Small ribosomal subunit protein uS13 (150 aa).

The disordered stretch occupies residues 131–150 (QRTKSTFRRGPTVGVSRRKK).

The protein belongs to the universal ribosomal protein uS13 family. In terms of assembly, part of the 30S ribosomal subunit. Forms a loose heterodimer with protein S19. Forms two bridges to the 50S subunit in the 70S ribosome.

In terms of biological role, located at the top of the head of the 30S subunit, it contacts several helices of the 16S rRNA. In the 70S ribosome it contacts the 23S rRNA (bridge B1a) and protein L5 of the 50S subunit (bridge B1b), connecting the 2 subunits; these bridges are implicated in subunit movement. The polypeptide is Small ribosomal subunit protein uS13 (Methanocaldococcus jannaschii (strain ATCC 43067 / DSM 2661 / JAL-1 / JCM 10045 / NBRC 100440) (Methanococcus jannaschii)).